Here is a 426-residue protein sequence, read N- to C-terminus: MKLQKPKGTQDILPGDAAKWQYVESVARDTFSQYNYGEIRTPMFEHYEVISRSVGDTTDIVTKEMYDFYDKGDRHITLRPEGTAPVVRSYVENKLFAPEVQKPVKLYYIGSMFRYERPQAGRLREFHQIGVECFGAANPATDVETIAMAYHLFEKLGIKDVTLHLNSLGSPESRAAYRQALIDYLTPMRDQLSKDSQRRLDENPLRVLDSKEKEDKLAVEKAPSILDYLDEESQAHFEAVKDMLEALDIPYVIDTNMVRGLDYYNHTIFEFITSVEGSDLTICAGGRYDSLVGYFGGPETPGFGFGLGLERLLMIIEKQGITLPIETEMDVYLAVLGDGANSKALELVQAIRRQGFTAERDYLGRKIKAQFKSADTFKAKLVMTLGESEVEAGKAVIKNNRSRQEVEVSFEDMMTNFANISEQLLS.

This sequence belongs to the class-II aminoacyl-tRNA synthetase family. In terms of assembly, homodimer.

It is found in the cytoplasm. It carries out the reaction tRNA(His) + L-histidine + ATP = L-histidyl-tRNA(His) + AMP + diphosphate + H(+). This is Histidine--tRNA ligase from Streptococcus pyogenes serotype M49 (strain NZ131).